A 231-amino-acid chain; its full sequence is Lipoprotein-releasing system ATP-binding protein LolD (231 aa).

Positions 6 to 230 (LSCKNVSKKY…DGELELVINS (225 aa)) constitute an ABC transporter domain. 42–49 (GLSGSGKT) is a binding site for ATP.

This sequence belongs to the ABC transporter superfamily. Lipoprotein translocase (TC 3.A.1.125) family. As to quaternary structure, the complex is composed of two ATP-binding proteins (LolD) and two transmembrane proteins (LolC and LolE).

The protein localises to the cell inner membrane. Functionally, part of the ABC transporter complex LolCDE involved in the translocation of mature outer membrane-directed lipoproteins, from the inner membrane to the periplasmic chaperone, LolA. Responsible for the formation of the LolA-lipoprotein complex in an ATP-dependent manner. This is Lipoprotein-releasing system ATP-binding protein LolD from Francisella tularensis subsp. holarctica (strain OSU18).